The chain runs to 557 residues: Formate--tetrahydrofolate ligase 2 (557 aa).

66-73 (TPAGEGKT) lines the ATP pocket.

The protein belongs to the formate--tetrahydrofolate ligase family.

The enzyme catalyses (6S)-5,6,7,8-tetrahydrofolate + formate + ATP = (6R)-10-formyltetrahydrofolate + ADP + phosphate. The protein operates within one-carbon metabolism; tetrahydrofolate interconversion. This Streptococcus pyogenes serotype M28 (strain MGAS6180) protein is Formate--tetrahydrofolate ligase 2.